A 411-amino-acid chain; its full sequence is Branched-chain-amino-acid aminotransferase, cytosolic (411 aa).

At K247 the chain carries N6-(pyridoxal phosphate)lysine.

This sequence belongs to the class-IV pyridoxal-phosphate-dependent aminotransferase family. Homodimer. Requires pyridoxal 5'-phosphate as cofactor. Post-translationally, the N-terminus is blocked. Brain, low expression in ovary and placenta, but not found in liver, kidney, and skeletal muscle.

It localises to the cytoplasm. It carries out the reaction L-leucine + 2-oxoglutarate = 4-methyl-2-oxopentanoate + L-glutamate. The enzyme catalyses L-isoleucine + 2-oxoglutarate = (S)-3-methyl-2-oxopentanoate + L-glutamate. The catalysed reaction is L-valine + 2-oxoglutarate = 3-methyl-2-oxobutanoate + L-glutamate. Functionally, catalyzes the first reaction in the catabolism of the essential branched chain amino acids leucine, isoleucine, and valine. In Rattus norvegicus (Rat), this protein is Branched-chain-amino-acid aminotransferase, cytosolic (Bcat1).